We begin with the raw amino-acid sequence, 241 residues long: ATP synthase subunit a (241 aa).

5 consecutive transmembrane segments (helical) span residues 30–50, 91–111, 128–148, 193–213, and 214–234; these read GQVFLTSWILLGALLVFISFG, FIGTLFLFVFVSNWGGALIPW, INTTIALALLVSLSYFYAGLS, LVVGVLVFLVPLILPIPVMFL, and GLFTSAIQALIFATLAAYYIG.

It belongs to the ATPase A chain family. F-type ATPases have 2 components, CF(1) - the catalytic core - and CF(0) - the membrane proton channel. CF(1) has five subunits: alpha(3), beta(3), gamma(1), delta(1), epsilon(1). CF(0) has four main subunits: a, b, b' and c.

Its subcellular location is the cellular thylakoid membrane. Its function is as follows. Key component of the proton channel; it plays a direct role in the translocation of protons across the membrane. The chain is ATP synthase subunit a from Prochlorococcus marinus (strain AS9601).